Consider the following 338-residue polypeptide: Heat-inducible transcription repressor HrcA (338 aa).

It belongs to the HrcA family.

Functionally, negative regulator of class I heat shock genes (grpE-dnaK-dnaJ and groELS operons). Prevents heat-shock induction of these operons. The polypeptide is Heat-inducible transcription repressor HrcA (Nitrosomonas eutropha (strain DSM 101675 / C91 / Nm57)).